The sequence spans 300 residues: Regulatory protein NocR (300 aa).

Residues 1-59 (MIQSRQLEAFRAVMLTGGMTSAANLVRITQPAISRLIRDLEEEIGISLFERTGNRLRPT) form the HTH lysR-type domain. Positions 19–38 (MTSAANLVRITQPAISRLIR) form a DNA-binding region, H-T-H motif.

Belongs to the LysR transcriptional regulatory family.

Positive regulatory protein for the noc operon involved in nopaline catabolism and uptake. This Agrobacterium fabrum (strain C58 / ATCC 33970) (Agrobacterium tumefaciens (strain C58)) protein is Regulatory protein NocR (nocR).